Consider the following 146-residue polypeptide: uncharacterized protein (146 aa).

The next 2 membrane-spanning stretches (helical) occupy residues 89–111 (AIEM…LLLY) and 121–143 (IGCG…YSVV).

The protein localises to the cell membrane. This is an uncharacterized protein from Archaeoglobus fulgidus (strain ATCC 49558 / DSM 4304 / JCM 9628 / NBRC 100126 / VC-16).